The following is a 203-amino-acid chain: uncharacterized protein (203 aa).

This is an uncharacterized protein from Magallana gigas (Pacific oyster).